Consider the following 193-residue polypeptide: Potassium-transporting ATPase KdpC subunit (193 aa).

A helical membrane pass occupies residues P7 to M27.

This sequence belongs to the KdpC family. In terms of assembly, the system is composed of three essential subunits: KdpA, KdpB and KdpC.

The protein localises to the cell inner membrane. Part of the high-affinity ATP-driven potassium transport (or Kdp) system, which catalyzes the hydrolysis of ATP coupled with the electrogenic transport of potassium into the cytoplasm. This subunit acts as a catalytic chaperone that increases the ATP-binding affinity of the ATP-hydrolyzing subunit KdpB by the formation of a transient KdpB/KdpC/ATP ternary complex. This is Potassium-transporting ATPase KdpC subunit from Burkholderia mallei (strain NCTC 10247).